A 79-amino-acid polypeptide reads, in one-letter code: WAP four-disulfide core domain protein 10A (79 aa).

A signal peptide spans 1 to 21; it reads MAPQTLLPVLVLCVLLLQAQG. Residues 34-79 form the WAP domain; sequence LSPEIKVCQQQPKLYLCKHLCESHRDCQANNICCSTYCGNVCMSIL. Disulfide bonds link cysteine 41–cysteine 67, cysteine 50–cysteine 71, cysteine 54–cysteine 66, and cysteine 60–cysteine 75.

Its subcellular location is the secreted. The chain is WAP four-disulfide core domain protein 10A (WFDC10A) from Homo sapiens (Human).